The chain runs to 281 residues: Splicing regulator RBM11 (281 aa).

Residues 10 to 87 (RTVFVGNLEA…RPINVQYRFG (78 aa)) enclose the RRM domain. The disordered stretch occupies residues 184 to 281 (PSSYKWTHQQ…FRKSKKKKRY (98 aa)). Polar residues-rich tracts occupy residues 187–217 (YKWTHQQPSDSDLYQMTAPLPNSASVSSSLN) and 229–242 (YKWTHQQPSDSDLY). Positions 245 to 280 (NKRKRQKQTSDSDSSTDNNRGNECSQKFRKSKKKKR) match the Bipartite nuclear localization signal motif. The segment covering 271-281 (KFRKSKKKKRY) has biased composition (basic residues).

Homodimer. As to expression, expressed in brain, hippocampus, prefrontal cortex, cerebellum, spinal cord, testis, mammary gland, spleen and kidney. Also expressed in fetal brain.

Its subcellular location is the nucleus. It localises to the nucleoplasm. The protein localises to the nucleus speckle. Its function is as follows. Tissue-specific splicing factor with potential implication in the regulation of alternative splicing during neuron and germ cell differentiation. Antagonizes SRSF1-mediated BCL-X splicing. May affect the choice of alternative 5' splice sites by binding to specific sequences in exons and antagonizing the SR protein SRSF1. The polypeptide is Splicing regulator RBM11 (Homo sapiens (Human)).